A 490-amino-acid polypeptide reads, in one-letter code: Arginine decarboxylase (490 aa).

An N6-(pyridoxal phosphate)lysine modification is found at lysine 226.

The protein belongs to the Orn/Lys/Arg decarboxylase class-I family. Pyridoxal 5'-phosphate serves as cofactor.

It localises to the cytoplasm. The enzyme catalyses L-arginine + H(+) = agmatine + CO2. It participates in amine and polyamine biosynthesis; agmatine biosynthesis; agmatine from L-arginine: step 1/1. Its function is as follows. Catalyzes the formation of agmatine from arginine. The polypeptide is Arginine decarboxylase (speA) (Bacillus subtilis (strain 168)).